Consider the following 87-residue polypeptide: Hemocyanin alpha chain (87 aa).

It belongs to the tyrosinase family. Hemocyanin subfamily. In terms of assembly, polymer that contains six different types of chains (alpha, beta, gamma, delta, epsilon, and zeta). As to expression, hemolymph.

The protein resides in the secreted. It localises to the extracellular space. Hemocyanins are copper-containing oxygen carriers occurring freely dissolved in the hemolymph of many mollusks and arthropods. In Tachypleus tridentatus (Japanese horseshoe crab), this protein is Hemocyanin alpha chain.